The following is a 625-amino-acid chain: 1-deoxy-D-xylulose-5-phosphate synthase (625 aa).

Residues His80 and 121–123 (GHS) contribute to the thiamine diphosphate site. Asp152 is a Mg(2+) binding site. Thiamine diphosphate contacts are provided by residues 153–154 (GA), Asn181, Tyr290, and Glu371. Asn181 is a binding site for Mg(2+).

The protein belongs to the transketolase family. DXPS subfamily. Homodimer. Mg(2+) is required as a cofactor. It depends on thiamine diphosphate as a cofactor.

It catalyses the reaction D-glyceraldehyde 3-phosphate + pyruvate + H(+) = 1-deoxy-D-xylulose 5-phosphate + CO2. It participates in metabolic intermediate biosynthesis; 1-deoxy-D-xylulose 5-phosphate biosynthesis; 1-deoxy-D-xylulose 5-phosphate from D-glyceraldehyde 3-phosphate and pyruvate: step 1/1. Its function is as follows. Catalyzes the acyloin condensation reaction between C atoms 2 and 3 of pyruvate and glyceraldehyde 3-phosphate to yield 1-deoxy-D-xylulose-5-phosphate (DXP). The protein is 1-deoxy-D-xylulose-5-phosphate synthase of Haemophilus influenzae (strain 86-028NP).